A 257-amino-acid chain; its full sequence is RLA class II histocompatibility antigen, DP beta chain (257 aa).

An N-terminal signal peptide occupies residues 1–29 (MRPCRSLRTAALAVVLTVLLHPVALGRAT). The tract at residues 30 to 120 (PGESEQNYLW…LFQGLPVLLQ (91 aa)) is beta-1. Residues 30 to 224 (PGESEQNYLW…KAQSDSARSK (195 aa)) lie on the Extracellular side of the membrane. Cystine bridges form between Cys-45/Cys-105 and Cys-143/Cys-199. Residue Asn-49 is glycosylated (N-linked (GlcNAc...) asparagine). The interval 121-214 (TQPRVSVSPS…SLDSPITVEW (94 aa)) is beta-2. The Ig-like C1-type domain occupies 123-211 (PRVSVSPSKK…EHPSLDSPIT (89 aa)). Residues 215-224 (KAQSDSARSK) are connecting peptide. A helical transmembrane segment spans residues 225–245 (MLAGVGGLVLGLVSLAVGVFM). Residues 246–257 (HRRSKKAQQGCR) lie on the Cytoplasmic side of the membrane.

This sequence belongs to the MHC class II family.

The protein localises to the membrane. The chain is RLA class II histocompatibility antigen, DP beta chain from Oryctolagus cuniculus (Rabbit).